A 340-amino-acid polypeptide reads, in one-letter code: N-acetyl-gamma-glutamyl-phosphate reductase (340 aa).

The active site involves C149.

The protein belongs to the NAGSA dehydrogenase family. Type 1 subfamily.

The protein localises to the cytoplasm. The enzyme catalyses N-acetyl-L-glutamate 5-semialdehyde + phosphate + NADP(+) = N-acetyl-L-glutamyl 5-phosphate + NADPH + H(+). The protein operates within amino-acid biosynthesis; L-arginine biosynthesis; N(2)-acetyl-L-ornithine from L-glutamate: step 3/4. Functionally, catalyzes the NADPH-dependent reduction of N-acetyl-5-glutamyl phosphate to yield N-acetyl-L-glutamate 5-semialdehyde. The protein is N-acetyl-gamma-glutamyl-phosphate reductase of Vesicomyosocius okutanii subsp. Calyptogena okutanii (strain HA).